Reading from the N-terminus, the 674-residue chain is L-type lectin-domain containing receptor kinase SIT1 (674 aa).

The first 27 residues, 1-27, serve as a signal peptide directing secretion; it reads MRRPELIMRSLPLILFLSLGSFHLAAA. Topologically, residues 28–301 are extracellular; the sequence is AVDDQFTFDG…IARAPSNVLK (274 aa). A legume-lectin like region spans residues 31–275; that stretch reads DQFTFDGFAG…VLAWSFKMDG (245 aa). 7 N-linked (GlcNAc...) asparagine glycosylation sites follow: Asn-42, Asn-61, Asn-143, Asn-196, Asn-219, Asn-240, and Asn-281. A helical membrane pass occupies residues 302-322; sequence ILLPIASAALVSALAIAVLVI. Topologically, residues 323-674 are cytoplasmic; the sequence is HRRRRRYAEL…GNISDIPRAR (352 aa). A Protein kinase domain is found at 357 to 636; that stretch reads FSDERLLGFG…LDGAMPLPEL (280 aa). Residues 363–371 and Lys-386 contribute to the ATP site; that span reads LGFGGFGRV. Asp-482 serves as the catalytic Proton acceptor. Phosphothreonine occurs at positions 511, 515, 516, and 521.

In the C-terminal section; belongs to the protein kinase superfamily. Ser/Thr protein kinase family. It in the N-terminal section; belongs to the leguminous lectin family. As to quaternary structure, interacts with B'KAPPA. In terms of processing, autophosphorylated at Thr-511, Thr-515 or Thr-516, and Thr-521 in response to salt stress. Dephosphorylated by phosphatase 2A in response to salt stress. In terms of tissue distribution, expressed in root epidermal cells.

It localises to the cell membrane. It carries out the reaction L-seryl-[protein] + ATP = O-phospho-L-seryl-[protein] + ADP + H(+). It catalyses the reaction L-threonyl-[protein] + ATP = O-phospho-L-threonyl-[protein] + ADP + H(+). Its activity is regulated as follows. Activated by autophosphorylation in response to salt stress. In terms of biological role, lectin-domain containing receptor kinase involved in salt stress response. Acts as a negative regulator of salt tolerance. Mediates salt sensitivity by phosphorylating and activating MPK3 and MPK6. Promotes ethylene production and mediates salt-induced ethylene signaling. Promotes the accumulation of reactive oxygen species (ROS) under salt stress conditions. Its kinase activity is triggered by salt stress and is required for its function in salt stress response. Phosphorylates B'KAPPA, a B regulatory subunit of phosphatase 2A (PP2A). The sequence is that of L-type lectin-domain containing receptor kinase SIT1 from Oryza sativa subsp. japonica (Rice).